A 167-amino-acid chain; its full sequence is Brain ribonuclease (167 aa).

The N-terminal stretch at Met1–Gly26 is a signal peptide. Substrate-binding residues include Lys33 and Arg36. His38 acts as the Proton acceptor in catalysis. Cystine bridges form between Cys52-Cys110, Cys66-Cys121, Cys84-Cys136, and Cys91-Cys98. Lys67–Thr71 contacts substrate. Residue Asn88 is glycosylated (N-linked (GlcNAc...) asparagine). Residues Lys92 and Arg111 each contribute to the substrate site. His145 acts as the Proton donor in catalysis. An O-linked (GalNAc...) threonine glycan is attached at Thr155. A glycan (O-linked (GalNAc...) serine) is linked at Ser159.

It belongs to the pancreatic ribonuclease family.

The protein localises to the secreted. This is Brain ribonuclease (BRN) from Bos taurus (Bovine).